We begin with the raw amino-acid sequence, 939 residues long: MSVFNKLMRAGEGKILRKLHRIADQVSSIEEDFVNLSDAELRALTDEYKERYADGESLDDLLPEAFATVREAAKRVLGQRHYDVQMMGGAALHLGYVAEMKTGEGKTLVGTLPAYLNALSGKGVHLITVNDYLAERDSELMGRVHKFLGLSVGCIVANMTPAQRREQYGCDITYGTNNEFGFDYLRDNMAWSKDELVQRGHNFAVVDEVDSILVDEARTPLIISGPADQATKWYGDFAKLVTRLTKGEAGNQLKGIEETGDYEVDEKKRTVAIHEAGVAKVEDWLGIDNLYESVNTPLVGYLNNAIKAKELFKKDKDYVVIDGEVMIVDEHTGRILAGRRYNEGMHQAIEAKEGVDIKDENQTLATITLQNFFRLYDKLSGMTGTAMTEAAEFHQIYKLGVVPIPTNRPMVRADQSDLIYRTEVAKFAAVVDDIAEKHEKGQPILVGTTSVEKSEYLSQQLSKRGVQHEVLNAKQHDREATIVAQAGRKGAVTVATNMAGRGTDIKLGGNPDDLAEAELRQRGLDPVENVEEWAAALPAALETAEQAVKAEFEEVKDLGGLYVLGTERHESRRIDNQLRGRSGRQGDPGESRFYLSLGDDLMRLFKAQMVERVMSMANVPDDVPIENKMVTRAIASAQSQVEQQNFETRKNVLKYDEVLNRQREVIYGERRRVLEGEDLQEQIRHFMDDTIDDYIRQETAEGFAEEWDLDRLWGAFKQLYPVKVTVDELEEAAGDLAGVTAEFIAESVKNDIHEQYEERENTLGSDIMRELERRVVLSVLDRKWREHLYEMDYLQEGIGLRAMAQKDPLVEYQREGFDMFNAMMEGIKEESVGYLFNLEVQVEQQVEEVPVQDGAERPSLEKEGATAAPQIRAKGLEAPQRPDRLHFSAPTVDGEGGVVEGDFANDEATGDTRSGSADGMTRAERRKAQKGGGGRRRKK.

ATP is bound by residues Gln-85, 103–107 (GEGKT), and Asp-504. The tract at residues 850–939 (PVQDGAERPS…KGGGGRRRKK (90 aa)) is disordered. Positions 854–864 (GAERPSLEKEG) are enriched in basic and acidic residues. The span at 924-939 (ERRKAQKGGGGRRRKK) shows a compositional bias: basic residues.

This sequence belongs to the SecA family. Monomer and homodimer. Part of the essential Sec protein translocation apparatus which comprises SecA, SecYEG and auxiliary proteins SecDF. Other proteins may also be involved.

It is found in the cell membrane. The protein localises to the cytoplasm. It carries out the reaction ATP + H2O + cellular proteinSide 1 = ADP + phosphate + cellular proteinSide 2.. Functionally, part of the Sec protein translocase complex. Interacts with the SecYEG preprotein conducting channel. Has a central role in coupling the hydrolysis of ATP to the transfer of proteins into and across the cell membrane, serving as an ATP-driven molecular motor driving the stepwise translocation of polypeptide chains across the membrane. This chain is Protein translocase subunit SecA, found in Streptomyces griseus subsp. griseus (strain JCM 4626 / CBS 651.72 / NBRC 13350 / KCC S-0626 / ISP 5235).